The sequence spans 169 residues: PTS system glucose-specific EIIA component (169 aa).

In terms of domain architecture, PTS EIIA type-1 spans 39–143; that stretch reads DVVFAEKIVG…STLTPVVISN (105 aa). His76 and His91 together coordinate Zn(2+). His91 serves as the catalytic Tele-phosphohistidine intermediate; for EIIA activity. His91 carries the post-translational modification Phosphohistidine; by HPr.

Heterodimer with glycerol kinase (glpk). Zn(2+) is required as a cofactor.

The protein resides in the cytoplasm. The phosphoenolpyruvate-dependent sugar phosphotransferase system (sugar PTS), a major carbohydrate active transport system, catalyzes the phosphorylation of incoming sugar substrates concomitantly with their translocation across the cell membrane. The enzyme II complex composed of PtsG and Crr is involved in glucose transport. The sequence is that of PTS system glucose-specific EIIA component (crr) from Escherichia coli O6:H1 (strain CFT073 / ATCC 700928 / UPEC).